A 365-amino-acid polypeptide reads, in one-letter code: MDDTRSYDIAWLPGDGIGPEVTREALRVLEAVGSAHGFSVTATEHRMGGVALDETGMPLPDSTRDACLESDAVLLGAVGGPKWADNTGDQRPESGLLALRKALGVYANLRPVRVPAALADASPLRPDRVGGTDILFVRELTGGIYFGTPEGRTDDGARSTMAYSDDEIERIAHVAFQRARRRDGNVTSVDKANVLEVSELWREVVTEVHDDCPDVTLRHLYVDNAAMQVVRDPRQFDVVLTGNLFGDILSDLAAALPGSLGLLPSASVGGTVGLFEPVHGSAPDIAGQDVANPTAAILSAALLLDEVGETAAADAVRHGVDAALDAGFRTADLAADNEEDASTSAFGREVATRAADSVPQNAPTP.

Residue 80 to 93 (GPKWADNTGDQRPE) participates in NAD(+) binding. Substrate is bound by residues arginine 100, arginine 110, arginine 138, and aspartate 223. Aspartate 223, aspartate 247, and aspartate 251 together coordinate Mg(2+). NAD(+) is bound at residue 280 to 292 (GSAPDIAGQDVAN). A disordered region spans residues 337–365 (NEEDASTSAFGREVATRAADSVPQNAPTP).

This sequence belongs to the isocitrate and isopropylmalate dehydrogenases family. LeuB type 1 subfamily. In terms of assembly, homodimer. Requires Mg(2+) as cofactor. Mn(2+) is required as a cofactor.

It is found in the cytoplasm. It catalyses the reaction (2R,3S)-3-isopropylmalate + NAD(+) = 4-methyl-2-oxopentanoate + CO2 + NADH. It participates in amino-acid biosynthesis; L-leucine biosynthesis; L-leucine from 3-methyl-2-oxobutanoate: step 3/4. Its function is as follows. Catalyzes the oxidation of 3-carboxy-2-hydroxy-4-methylpentanoate (3-isopropylmalate) to 3-carboxy-4-methyl-2-oxopentanoate. The product decarboxylates to 4-methyl-2 oxopentanoate. This is 3-isopropylmalate dehydrogenase from Salinibacter ruber (strain DSM 13855 / M31).